The sequence spans 627 residues: tRNA uridine 5-carboxymethylaminomethyl modification enzyme MnmG (627 aa).

FAD is bound by residues glycine 13 to glycine 18, valine 125, and serine 180. NAD(+) is bound at residue glycine 274–phenylalanine 288. Glutamine 371 is an FAD binding site.

The protein belongs to the MnmG family. In terms of assembly, homodimer. Heterotetramer of two MnmE and two MnmG subunits. FAD serves as cofactor.

Its subcellular location is the cytoplasm. In terms of biological role, NAD-binding protein involved in the addition of a carboxymethylaminomethyl (cmnm) group at the wobble position (U34) of certain tRNAs, forming tRNA-cmnm(5)s(2)U34. In Francisella tularensis subsp. novicida (strain U112), this protein is tRNA uridine 5-carboxymethylaminomethyl modification enzyme MnmG.